The primary structure comprises 468 residues: MGTVHARSLDPLPMNGPDFGSHDDADLVEVEPQKKQEILENKDVVVQRVHFEGLGRTKDDLIAHEIGQVFKAKNLIEVMRKSHEAREKLLRLGVFRNVEVLIDTCEGEDALPNGLDVTFEVTELRRLTGSYNTMVGNNEGSMVLGLKLPNLFGRAEKMTFQFSYGTKETSYGLSFFKPQVGNFERNFSVNLYKVTGQFPWSSLRETDRGVSAEINFPIWKTSHTLKWEGVWRELGCLARTASFAIREESGHTLKSSLSHTMVIDSRNTSILPKRGALLKINQELAGYTGGDVSFLKEDFELQLNKQLAWDSVLSTSLWGGMLVPIGDKPSSIADRFYLGGPTSVRGFSMYSIGPQSEGDYLGGEAYWAGGMHLYTPLPFRPGRGGFGDLFRTHFFLNAGNLCNLNYGEGPRAHLRRLAECIRWSYGAGIVLRLGNIARLELNYCIPMGVQSGDRICDGVQFGAGIRFL.

The tract at residues 1-24 (MGTVHARSLDPLPMNGPDFGSHDD) is disordered. In terms of domain architecture, POTRA spans 44 to 124 (VVVQRVHFEG…LDVTFEVTEL (81 aa)).

The protein belongs to the SAM50/omp85 family. Associates with the mitochondrial contact site and cristae organizing system (MICOS) complex (also known as MINOS or MitOS complex).

The protein localises to the mitochondrion outer membrane. In terms of biological role, may play a role in the maintenance of the structure of mitochondrial cristae. This Xenopus tropicalis (Western clawed frog) protein is Sorting and assembly machinery component 50 homolog (samm50).